A 98-amino-acid polypeptide reads, in one-letter code: Large ribosomal subunit protein bL25 (98 aa).

Residues 1–23 (MANFVLNAQARAEDKQGKGASRR) form a disordered region.

Belongs to the bacterial ribosomal protein bL25 family. In terms of assembly, part of the 50S ribosomal subunit; part of the 5S rRNA/L5/L18/L25 subcomplex. Contacts the 5S rRNA. Binds to the 5S rRNA independently of L5 and L18.

Functionally, this is one of the proteins that binds to the 5S RNA in the ribosome where it forms part of the central protuberance. The polypeptide is Large ribosomal subunit protein bL25 (Acinetobacter baumannii (strain ATCC 17978 / DSM 105126 / CIP 53.77 / LMG 1025 / NCDC KC755 / 5377)).